Consider the following 373-residue polypeptide: Glutamine synthetase (373 aa).

Residue A2 is modified to N-acetylalanine. The tract at residues 2 to 25 is required for glutamine-induced ubiquitination by CRL4(CRBN) and proteasomal degradation; it reads ATSASSHLNKGIKQMYMSLPQGEK. An N6-acetyllysine mark is found at K11 and K14. One can recognise a GS beta-grasp domain in the interval 24–106; it reads EKVQAMYIWV…VFCEVFKYNQ (83 aa). Phosphotyrosine is present on Y104. Residues 113–373 enclose the GS catalytic domain; the sequence is LRHTCKRIMD…TGDQPFQYKN (261 aa). E134 contributes to the ATP binding site. Residues E134, E136, E196, and E203 each contribute to the Mn(2+) site. ATP is bound at residue 203 to 208; the sequence is EFQIGP. 246–247 provides a ligand contact to L-glutamate; it reads NW. Position 253 (H253) interacts with Mn(2+). ATP contacts are provided by residues 255-257, R319, and R324; that span reads NFS. R319 contacts L-glutamate. 336 to 338 contributes to the ADP binding site; sequence YFE. E338 lines the Mn(2+) pocket. An L-glutamate-binding site is contributed by R340. The residue at position 343 (S343) is a Phosphoserine.

Belongs to the glutamine synthetase family. In terms of assembly, decamer; composed of two pentamers. Interacts with PALMD. Interacts with RHOJ. Interacts with BEST2; this interaction tethers a fraction of GLUL to the membrane, causing a decrease of cytosolic glutamine synthase (GS) activity and inhibits the chloride channel activity of BEST2 by affecting the gating at the aperture in the absence of intracellular glutamate. Requires Mg(2+) as cofactor. The cofactor is Mn(2+). In terms of processing, palmitoylated; undergoes autopalmitoylation. Acetylated by EP300/p300; acetylation is stimulated by increased glutamine levels and promotes ubiquitin-mediated proteasomal degradation. Post-translationally, ubiquitinated by ZNRF1. Ubiquitinated by the DCX (DDB1-CUL4-X-box) E3 ubiquitin-protein ligase complex called CRL4(CRBN), leading to proteasomal degradation.

It localises to the cytoplasm. The protein resides in the cytosol. Its subcellular location is the microsome. It is found in the mitochondrion. The protein localises to the cell membrane. The enzyme catalyses L-glutamate + NH4(+) + ATP = L-glutamine + ADP + phosphate + H(+). It carries out the reaction L-cysteinyl-[protein] + hexadecanoyl-CoA = S-hexadecanoyl-L-cysteinyl-[protein] + CoA. With respect to regulation, glutamine synthetase activity is inhibited by methionine sulfoximine (MSO). Functionally, glutamine synthetase that catalyzes the ATP-dependent conversion of glutamate and ammonia to glutamine. Its role depends on tissue localization: in the brain, it regulates the levels of toxic ammonia and converts neurotoxic glutamate to harmless glutamine, whereas in the liver, it is one of the enzymes responsible for the removal of ammonia. Plays a key role in ammonium detoxification during erythropoiesis: the glutamine synthetase activity is required to remove ammonium generated by porphobilinogen deaminase (HMBS) during heme biosynthesis to prevent ammonium accumulation and oxidative stress. Essential for proliferation of fetal skin fibroblasts. Independently of its glutamine synthetase activity, required for endothelial cell migration during vascular development. Involved in angiogenesis by regulating membrane localization and activation of the GTPase RHOJ, possibly by promoting RHOJ palmitoylation. May act as a palmitoyltransferase for RHOJ: able to autopalmitoylate and then transfer the palmitoyl group to RHOJ. Plays a role in ribosomal 40S subunit biogenesis. Through the interaction with BEST2, inhibits BEST2 channel activity by affecting the gating at the aperture in the absence of intracellular L-glutamate, but sensitizes BEST2 to intracellular L-glutamate, which promotes the opening of BEST2 and thus relieves its inhibitory effect on BEST2. This is Glutamine synthetase from Cricetulus griseus (Chinese hamster).